Reading from the N-terminus, the 348-residue chain is Type II methyltransferase M.BglI (348 aa).

This sequence belongs to the N(4)/N(6)-methyltransferase family.

It catalyses the reaction a 2'-deoxycytidine in DNA + S-adenosyl-L-methionine = an N(4)-methyl-2'-deoxycytidine in DNA + S-adenosyl-L-homocysteine + H(+). Functionally, a beta subtype methylase, recognizes the double-stranded sequence 5'-GCCNNNNNGGC-3', methylates C-2 on both strands, and protects the DNA from cleavage by the BglI endonuclease. The polypeptide is Type II methyltransferase M.BglI (bglIM) (Bacillus subtilis).